The primary structure comprises 170 residues: Prenyl-diphosphate phosphatase (170 aa).

One can recognise a Nudix hydrolase domain in the interval 25-155 (HIHRASQLIL…PGNYTPALRE (131 aa)). Positions 59–83 (YSVSGTVADESYEACIAREMLEEIG) match the Nudix box motif. Mg(2+) contacts are provided by E77 and E81.

The protein belongs to the Nudix hydrolase family. Mg(2+) is required as a cofactor.

The enzyme catalyses dimethylallyl diphosphate + H2O = dimethylallyl phosphate + phosphate + H(+). The catalysed reaction is isopentenyl diphosphate + H2O = isopentenyl phosphate + phosphate + H(+). It carries out the reaction (2E,6E)-farnesyl diphosphate + H2O = (2E,6E)-farnesyl phosphate + phosphate + H(+). It catalyses the reaction (2E)-geranyl diphosphate + H2O = (2E)-geranyl phosphate + phosphate + H(+). The protein operates within isoprenoid biosynthesis. Functionally, hydrolyzes homoallylic isopentenyl diphosphate (IPP), its allylic isomer dimethylallyl diphosphate (DMAPP) and short-chain prenyl diphosphates geranyl diphosphate (GPP) and farnesyl diphosphate (FPP) to their corresponding monophosphate forms with high activity. The preferred substrate is IPP. ADP, NADPH, Ap5A and thiamine diphosphate (TPP) are weakly hydrolyzed. No hydrolysis with ATP, dNTPs, 8-OH-dGTP, NAD+, FAD or acetyl-CoA. The likely physiological role of this enzyme is to provide a substrate dimethylallyl phosphate (DMAP) for prenylated flavin mononucleotide (prenyl-FMN) synthase MM_1871 involved in the biosynthesis of prenyl-FMN, a coenzyme required in the archaea-specific mevalonate pathway. The polypeptide is Prenyl-diphosphate phosphatase (Methanosarcina mazei (strain ATCC BAA-159 / DSM 3647 / Goe1 / Go1 / JCM 11833 / OCM 88) (Methanosarcina frisia)).